The following is a 284-amino-acid chain: Agamous-like MADS-box protein AGL49 (284 aa).

The segment at 1–20 (MAPRQKKPNKSDDDDGDLHR) is disordered. The region spanning 21–66 (KKQSFFKQRFPGFKKKASELSVLCGNSVGFICYGPDNDLHVWPQSQ) is the MADS-box domain.

In terms of assembly, interacts with MEE14/CBP1.

It is found in the nucleus. Its function is as follows. Probable transcription factor that may function in the maintenance of the proper function of the central cell in pollen tube attraction. This chain is Agamous-like MADS-box protein AGL49, found in Arabidopsis thaliana (Mouse-ear cress).